Reading from the N-terminus, the 299-residue chain is Protease HtpX homolog (299 aa).

2 consecutive transmembrane segments (helical) span residues 15–35 (ILLL…GYLF) and 39–59 (GLGG…SMIF). Zn(2+) is bound at residue His-143. Residue Glu-144 is part of the active site. Residue His-147 coordinates Zn(2+). Transmembrane regions (helical) follow at residues 158 to 178 (IAVA…RMMW) and 198 to 218 (IIML…ATLV). A Zn(2+)-binding site is contributed by Glu-227.

This sequence belongs to the peptidase M48B family. Requires Zn(2+) as cofactor.

It localises to the cell membrane. The sequence is that of Protease HtpX homolog from Streptococcus pneumoniae (strain P1031).